We begin with the raw amino-acid sequence, 293 residues long: L-ornithine N(alpha)-acyltransferase (293 aa).

This sequence belongs to the acetyltransferase family. OlsB subfamily.

It carries out the reaction a (3R)-hydroxyacyl-[ACP] + L-ornithine = a lyso-ornithine lipid + holo-[ACP] + H(+). It functions in the pathway lipid metabolism. Its function is as follows. Catalyzes the first step in the biosynthesis of ornithine lipids, which are phosphorus-free membrane lipids. Catalyzes the 3-hydroxyacyl-acyl carrier protein-dependent acylation of ornithine to form lyso-ornithine lipid (LOL). This is L-ornithine N(alpha)-acyltransferase from Agrobacterium fabrum (strain C58 / ATCC 33970) (Agrobacterium tumefaciens (strain C58)).